Reading from the N-terminus, the 73-residue chain is UPF0154 protein LJ_1506 (73 aa).

A helical membrane pass occupies residues 3–23 (LGLAIFLIIIALLIGLVGGFY).

Belongs to the UPF0154 family.

It localises to the cell membrane. The sequence is that of UPF0154 protein LJ_1506 from Lactobacillus johnsonii (strain CNCM I-12250 / La1 / NCC 533).